Reading from the N-terminus, the 151-residue chain is Transcriptional repressor NrdR (151 aa).

A disordered region spans residues 1–21 (MRCPFCGEADTQVKDSRPTED). A zinc finger spans residues 3-34 (CPFCGEADTQVKDSRPTEDGAAIRRRRFCPQC). The segment covering 11 to 21 (TQVKDSRPTED) has biased composition (basic and acidic residues). Positions 49-139 (LVVVKADQRR…VYRDFREAKD (91 aa)) constitute an ATP-cone domain.

It belongs to the NrdR family. It depends on Zn(2+) as a cofactor.

Its function is as follows. Negatively regulates transcription of bacterial ribonucleotide reductase nrd genes and operons by binding to NrdR-boxes. In Acidiphilium cryptum (strain JF-5), this protein is Transcriptional repressor NrdR.